We begin with the raw amino-acid sequence, 156 residues long: Small ribosomal subunit protein uS7 (156 aa).

Belongs to the universal ribosomal protein uS7 family. Part of the 30S ribosomal subunit. Contacts proteins S9 and S11.

Functionally, one of the primary rRNA binding proteins, it binds directly to 16S rRNA where it nucleates assembly of the head domain of the 30S subunit. Is located at the subunit interface close to the decoding center, probably blocks exit of the E-site tRNA. This Burkholderia ambifaria (strain MC40-6) protein is Small ribosomal subunit protein uS7.